The sequence spans 161 residues: SsrA-binding protein (161 aa).

Belongs to the SmpB family.

It is found in the cytoplasm. In terms of biological role, required for rescue of stalled ribosomes mediated by trans-translation. Binds to transfer-messenger RNA (tmRNA), required for stable association of tmRNA with ribosomes. tmRNA and SmpB together mimic tRNA shape, replacing the anticodon stem-loop with SmpB. tmRNA is encoded by the ssrA gene; the 2 termini fold to resemble tRNA(Ala) and it encodes a 'tag peptide', a short internal open reading frame. During trans-translation Ala-aminoacylated tmRNA acts like a tRNA, entering the A-site of stalled ribosomes, displacing the stalled mRNA. The ribosome then switches to translate the ORF on the tmRNA; the nascent peptide is terminated with the 'tag peptide' encoded by the tmRNA and targeted for degradation. The ribosome is freed to recommence translation, which seems to be the essential function of trans-translation. The protein is SsrA-binding protein of Mycolicibacterium smegmatis (strain ATCC 700084 / mc(2)155) (Mycobacterium smegmatis).